The primary structure comprises 331 residues: Protein mono-ADP-ribosyltransferase PARP11 (331 aa).

At lysine 11 the chain carries N6-(ADP-ribosyl)lysine. The WWE domain maps to 15 to 99 (SDVDDMDTSD…VTGKQRLIKR (85 aa)). ADP-ribosylcysteine is present on residues cysteine 49 and cysteine 65. Aspartate 80 carries the post-translational modification ADP-ribosyl aspartic acid. The PARP catalytic domain occupies 116-331 (IPMPTHWENV…IYPEYLIDFH (216 aa)).

The protein belongs to the ARTD/PARP family. Post-translationally, auto-mono-ADP-ribosylated. Predominantly expressed in testis, preferentially in postmeiotic germ cells. Also detectable in other tissues, including liver, lung, spleen, thymus and brain.

It is found in the nucleus. The protein resides in the nuclear pore complex. The enzyme catalyses L-aspartyl-[protein] + NAD(+) = 4-O-(ADP-D-ribosyl)-L-aspartyl-[protein] + nicotinamide. It carries out the reaction L-cysteinyl-[protein] + NAD(+) = S-(ADP-D-ribosyl)-L-cysteinyl-[protein] + nicotinamide + H(+). The catalysed reaction is L-glutamyl-[protein] + NAD(+) = 5-O-(ADP-D-ribosyl)-L-glutamyl-[protein] + nicotinamide. It catalyses the reaction L-lysyl-[protein] + NAD(+) = N(6)-(ADP-D-ribosyl)-L-lysyl-[protein] + nicotinamide + H(+). Its function is as follows. Mono-ADP-ribosyltransferase that mediates mono-ADP-ribosylation of target proteins. Plays a role in nuclear envelope stability and nuclear remodeling during spermiogenesis. Inhibits the type I interferon activated signaling pathway. Mechanistically, mono-ADP-ribosylates beta-TrCP/BTRC to promote IFNAR1 ubiquitination and protect BTRC from ubiquitin-proteasome degradation. This is Protein mono-ADP-ribosyltransferase PARP11 from Mus musculus (Mouse).